The sequence spans 993 residues: Lateral signaling target protein 2 homolog (993 aa).

4 disordered regions span residues 340-449 (DQRN…DTTD), 494-623 (DGYG…TVVQ), 759-813 (GARH…GDQE), and 825-902 (AVNE…PPAW). Over residues 343-360 (NNNNNINNNSSSSSNSNS) the composition is skewed to low complexity. Residues 372–405 (RSPSMLSLSTASPTPSHSIGSTFSAATSSTNPPV) are compositionally biased toward polar residues. The segment covering 409–448 (DGDDADDDDDGDDDDEDDDDDVDDDLVGNDDSDDDDDDTT) has biased composition (acidic residues). Residues Ser-525 and Ser-526 each carry the phosphoserine modification. Residues 535–549 (SHNNTTTIKSPDSDG) show a composition bias toward polar residues. Residues 559–608 (SRQRHSHHHHRHHHHHHRHSSHSSHSHHHQHQQHHSQPHPHRTTRSGRKR) show a composition bias toward basic residues. A compositionally biased stretch (low complexity) spans 759-801 (GARHSAGASMQRNHTTIDNNNSTSSSPPDATITTTTTTTTTRS). Ser-808 bears the Phosphoserine mark. 2 stretches are compositionally biased toward low complexity: residues 842–862 (SNTP…QNSP) and 884–896 (TTAT…GTGT). Residues 905–965 (DGKAPRCMSC…VCRDCYAREI (61 aa)) form an FYVE-type zinc finger. Residues Cys-911, Cys-914, Cys-927, Cys-930, Cys-935, Cys-938, Cys-957, and Cys-960 each coordinate Zn(2+). The segment at 968-993 (SGGGGGGVVQMQRQQAANRPQTASAS) is disordered. Positions 978–993 (MQRQQAANRPQTASAS) are enriched in polar residues.

This sequence belongs to the lst-2 family.

Negative regulator of epidermal growth factor receptor (EGFR) signaling. The chain is Lateral signaling target protein 2 homolog from Drosophila willistoni (Fruit fly).